The chain runs to 298 residues: Cyanophycinase (298 aa).

Residues Ser-155, Glu-173, and His-197 each act as charge relay system in the active site.

Belongs to the peptidase S51 family.

The catalysed reaction is [L-4-(L-arginin-2-N-yl)aspartate](n) + H2O = [L-4-(L-arginin-2-N-yl)aspartate](n-1) + L-4-(L-arginin-2-N-yl)aspartate. In terms of biological role, exopeptidase that catalyzes the hydrolytic cleavage of multi-L-arginyl-poly-L-aspartic acid (cyanophycin; a water-insoluble reserve polymer) into aspartate-arginine dipeptides. In Nostoc sp. (strain PCC 7120 / SAG 25.82 / UTEX 2576), this protein is Cyanophycinase (cphB).